The chain runs to 310 residues: NAD-dependent protein deacylase sirtuin-5, mitochondrial (310 aa).

A mitochondrion-targeting transit peptide spans 1–36; the sequence is MQPLQIAPCRLLYGLYRGLKSPASTGTRICPAMARP. Positions 37 to 307 constitute a Deacetylase sirtuin-type domain; sequence SSNMADFRKL…PEALAPHETG (271 aa). 58–77 serves as a coordination point for NAD(+); the sequence is GAGVSAESGVPTFRGAGGYW. Substrate-binding residues include Tyr-102 and Arg-105. 140–143 lines the NAD(+) pocket; the sequence is QNID. Catalysis depends on His-158, which acts as the Proton acceptor. 4 residues coordinate Zn(2+): Cys-166, Cys-169, Cys-207, and Cys-212. Residues 249–251, 275–277, and Cys-293 contribute to the NAD(+) site; these read GTS and NME.

It belongs to the sirtuin family. Class III subfamily. In terms of assembly, monomer. Homodimer. Interacts with CPS1. Interacts with PCCA. It depends on Zn(2+) as a cofactor.

It localises to the mitochondrion. The protein resides in the cytoplasm. Its subcellular location is the cytosol. The protein localises to the nucleus. The enzyme catalyses N(6)-malonyl-L-lysyl-[protein] + NAD(+) + H2O = 2''-O-malonyl-ADP-D-ribose + nicotinamide + L-lysyl-[protein]. The catalysed reaction is N(6)-succinyl-L-lysyl-[protein] + NAD(+) + H2O = 2''-O-succinyl-ADP-D-ribose + nicotinamide + L-lysyl-[protein]. It carries out the reaction N(6)-glutaryl-L-lysyl-[protein] + NAD(+) + H2O = 2''-O-glutaryl-ADP-D-ribose + nicotinamide + L-lysyl-[protein]. Functionally, NAD-dependent lysine demalonylase, desuccinylase and deglutarylase that specifically removes malonyl, succinyl and glutaryl groups on target proteins. Activates CPS1 and contributes to the regulation of blood ammonia levels during prolonged fasting: acts by mediating desuccinylation and deglutarylation of CPS1, thereby increasing CPS1 activity in response to elevated NAD levels during fasting. Activates SOD1 by mediating its desuccinylation, leading to reduced reactive oxygen species. Activates SHMT2 by mediating its desuccinylation. Modulates ketogenesis through the desuccinylation and activation of HMGCS2. Has weak NAD-dependent protein deacetylase activity; however this activity may not be physiologically relevant in vivo. Can deacetylate cytochrome c (CYCS) and a number of other proteins in vitro such as UOX. The sequence is that of NAD-dependent protein deacylase sirtuin-5, mitochondrial from Canis lupus familiaris (Dog).